Here is a 691-residue protein sequence, read N- to C-terminus: Ribonuclease J (691 aa).

Residues 1-89 are disordered; that stretch reads MTDNNHYENN…TRNYAKEELD (89 aa). Positions 1–132 are loss of region decreases protein stability, still able to interact with RhpA, but has decreased RNase activity even on ssRNA; the sequence is MTDNNHYENN…KIQVEHLNPH (132 aa). Low complexity predominate over residues 10–19; that stretch reads NESNENSSEN. Basic and acidic residues predominate over residues 41–57; it reads RENAQKNGESSHHEAPS. Positions 58–82 are enriched in basic residues; the sequence is HHKKEHRPNKKPNNHHKQKHAKTRN. N6-acetyllysine is present on residues K134 and K140. Residues H208, H210, D212, H213, H277, and D299 each contribute to the Zn(2+) site. 3 positions are modified to N6-acetyllysine: K323, K337, and K397. Residue 500–504 participates in substrate binding; sequence HVSGH. At K511 the chain carries N6-acetyllysine. H526 is a binding site for Zn(2+). Residues K547, K634, and K649 each carry the N6-acetyllysine modification.

Belongs to the metallo-beta-lactamase superfamily. RNA-metabolizing metallo-beta-lactamase-like family. Bacterial RNase J subfamily. Homodimer. Homotetramer; dimer of homodimers. Interacts with RNA helicase RphA, might be a member of a minimal RNA degradosome complex. Zn(2+) serves as cofactor. In terms of processing, acetylated on nine lysine residues. Some of the residues are acetylated by multiple different mechanisms. RimL is partially responsible for the acetylation of Lys-323, Lys-397 and Lys-649. HPB8_1270 homolog is partially responsible for the acetylation of Lys-323, Lys-397, Lys-511 and Lys-649. Acetyl-phosphate-mediated non-enzymatic acetylation pathway takes part in the acetylation of Lys-134, Lys-323, Lys-397, Lys-511 and Lys-649. Acetylation of the remaining residues Lys-140, Lys-337, Lys-547 and Lys-634 occurs by a yet undetermined mechanism. Acetylation on a number of these residues is important for growth regulation and proper cell morphology.

It is found in the cytoplasm. Catalytic activity is regulated by the balance between homodimers and homotetramers, with homotetramers being the active forms of this enzyme. Acetylation allosterically regulates the homooligomerization state and hence the catalytic activity. An RNase that has 5'-3' exoribonuclease and endoribonuclease activity. Degrades 5'-monophosphorylated ssRNA and dsRNA, considerably more active on ssRNA. Association with RhpA significantly increases the dsRNase activity. Degrades RNA substrate with hairpin structures at both ends with low activity, but presence of RhpA significantly increases the activity on this substrate. Stimulates ATPase activity of RNA helicase RhpA. Involved in stabilization of mRNA but apparently not rRNA. This chain is Ribonuclease J, found in Helicobacter pylori (strain B128).